We begin with the raw amino-acid sequence, 468 residues long: ATP synthase subunit beta (468 aa).

155–162 lines the ATP pocket; that stretch reads GGAGVGKT.

It belongs to the ATPase alpha/beta chains family. In terms of assembly, F-type ATPases have 2 components, CF(1) - the catalytic core - and CF(0) - the membrane proton channel. CF(1) has five subunits: alpha(3), beta(3), gamma(1), delta(1), epsilon(1). CF(0) has three main subunits: a(1), b(2) and c(9-12). The alpha and beta chains form an alternating ring which encloses part of the gamma chain. CF(1) is attached to CF(0) by a central stalk formed by the gamma and epsilon chains, while a peripheral stalk is formed by the delta and b chains.

Its subcellular location is the cell membrane. The enzyme catalyses ATP + H2O + 4 H(+)(in) = ADP + phosphate + 5 H(+)(out). Functionally, produces ATP from ADP in the presence of a proton gradient across the membrane. The catalytic sites are hosted primarily by the beta subunits. The protein is ATP synthase subunit beta of Streptococcus pyogenes serotype M49 (strain NZ131).